The following is a 305-amino-acid chain: UDP-N-acetylenolpyruvoylglucosamine reductase (305 aa).

Residues lysine 22–glycine 190 form the FAD-binding PCMH-type domain. Residue arginine 169 is part of the active site. The active-site Proton donor is the serine 220. The active site involves glutamate 290.

Belongs to the MurB family. The cofactor is FAD.

The protein localises to the cytoplasm. It catalyses the reaction UDP-N-acetyl-alpha-D-muramate + NADP(+) = UDP-N-acetyl-3-O-(1-carboxyvinyl)-alpha-D-glucosamine + NADPH + H(+). It functions in the pathway cell wall biogenesis; peptidoglycan biosynthesis. In terms of biological role, cell wall formation. The protein is UDP-N-acetylenolpyruvoylglucosamine reductase of Synechococcus sp. (strain RCC307).